We begin with the raw amino-acid sequence, 275 residues long: NADPH-dependent 7-cyano-7-deazaguanine reductase (275 aa).

81–83 serves as a coordination point for substrate; it reads VES. An NADPH-binding site is contributed by 83–84; sequence SK. The active-site Thioimide intermediate is Cys-182. Asp-189 acts as the Proton donor in catalysis. 221 to 222 serves as a coordination point for substrate; the sequence is HE. 250 to 251 is a binding site for NADPH; the sequence is RG.

Belongs to the GTP cyclohydrolase I family. QueF type 2 subfamily. Homodimer.

The protein localises to the cytoplasm. The enzyme catalyses 7-aminomethyl-7-carbaguanine + 2 NADP(+) = 7-cyano-7-deazaguanine + 2 NADPH + 3 H(+). It functions in the pathway tRNA modification; tRNA-queuosine biosynthesis. Catalyzes the NADPH-dependent reduction of 7-cyano-7-deazaguanine (preQ0) to 7-aminomethyl-7-deazaguanine (preQ1). This chain is NADPH-dependent 7-cyano-7-deazaguanine reductase, found in Polaromonas sp. (strain JS666 / ATCC BAA-500).